A 277-amino-acid chain; its full sequence is MGIRVYKPTTNGRRNMTSLDFAEITTSTPEKSLLVSLKSKAGRNNNGRITVRHQGGGHKRHYRLIDFKRNKDAVEAVVKTIEYDPNRSANIALVHYTDGVKAYIIAPKGLEVGQRIVSGPEADIKVGNALPLANIPVGTLVHNIELKPGRGGELVRAAGASAQVLGQEGKYTLVRLQSGEVRMILGTCRATVGVVGNEQHGLVNLGKAGRSRWKGIRPTVRGSVMNPNDHPHGGGEGKAPVGRKAPSTPWGKPALGLKTRNKKAKSDKLIVRRRNEK.

Residues 219–277 (TVRGSVMNPNDHPHGGGEGKAPVGRKAPSTPWGKPALGLKTRNKKAKSDKLIVRRRNEK) form a disordered region. Basic and acidic residues predominate over residues 264-277 (AKSDKLIVRRRNEK).

This sequence belongs to the universal ribosomal protein uL2 family. In terms of assembly, part of the 50S ribosomal subunit. Forms a bridge to the 30S subunit in the 70S ribosome.

Functionally, one of the primary rRNA binding proteins. Required for association of the 30S and 50S subunits to form the 70S ribosome, for tRNA binding and peptide bond formation. It has been suggested to have peptidyltransferase activity; this is somewhat controversial. Makes several contacts with the 16S rRNA in the 70S ribosome. The polypeptide is Large ribosomal subunit protein uL2 (Streptococcus gordonii (strain Challis / ATCC 35105 / BCRC 15272 / CH1 / DL1 / V288)).